The chain runs to 88 residues: Small ribosomal subunit protein bS16c (88 aa).

It belongs to the bacterial ribosomal protein bS16 family.

The protein resides in the plastid. The protein localises to the chloroplast. The sequence is that of Small ribosomal subunit protein bS16c from Gossypium barbadense (Sea Island cotton).